Consider the following 499-residue polypeptide: NAD(P)H-quinone oxidoreductase chain 4, chloroplastic (499 aa).

14 consecutive transmembrane segments (helical) span residues 4 to 24 (LPWL…IPLF), 31 to 51 (MIRW…TYIF), 87 to 107 (IGLI…AWPV), 113 to 130 (LLHF…GLFA), 134 to 154 (ILLF…LLSM), 167 to 187 (FLLY…SMGL), 211 to 231 (ILLY…FPLH), 242 to 262 (HYST…YGLI), 274 to 294 (SLFS…AALT), 305 to 325 (IAYS…SMTY), 330 to 350 (GAIL…FLVG), 386 to 406 (LALP…GVIT), 416 to 436 (IIIT…LLSM), and 462 to 482 (LFIL…PDLV).

This sequence belongs to the complex I subunit 4 family.

The protein resides in the plastid. It is found in the chloroplast thylakoid membrane. The enzyme catalyses a plastoquinone + NADH + (n+1) H(+)(in) = a plastoquinol + NAD(+) + n H(+)(out). It catalyses the reaction a plastoquinone + NADPH + (n+1) H(+)(in) = a plastoquinol + NADP(+) + n H(+)(out). This chain is NAD(P)H-quinone oxidoreductase chain 4, chloroplastic, found in Cryptomeria japonica (Japanese cedar).